We begin with the raw amino-acid sequence, 407 residues long: BMP-like protein unc-129 (407 aa).

Residues 1-18 (MRRLPIVLLLSVFSIANC) form the signal peptide. 3 N-linked (GlcNAc...) asparagine glycosylation sites follow: Asn27, Asn42, and Asn211. The segment at 252-283 (DDREPIKRKNGKKNSLSEEISSEDVWQGFGEE) is disordered. The N-linked (GlcNAc...) asparagine glycan is linked to Asn395.

It belongs to the TGF-beta family. In terms of assembly, interacts with netrin receptor unc-5; the interaction is direct.

The protein localises to the secreted. It localises to the extracellular space. Required for the migration of axonal growth-cones and distal tip cells (DTC) along the dorsal-ventral axis of the body wall. Acts cell nonautonomously and independently of the classical daf-4, sma-6 or daf-1 TGFbeta receptor signaling. During axon migration, facilitates long-range repulsive guidance of unc-6/netrin by enhancing unc-5-unc-40 signaling at the expense of unc-5 alone signaling, probably through direct interaction with receptor unc-5. Involved in cell-cell contact formation in sensory rays in the developing male tail, via a pathway involving plx-2 and mab-20/semaphorin-2A. The chain is BMP-like protein unc-129 from Caenorhabditis elegans.